Here is a 64-residue protein sequence, read N- to C-terminus: UPF0370 protein YE1145 (64 aa).

A helical transmembrane segment spans residues 3 to 23; the sequence is WLADYWWVVLIILVGMILNGI. The disordered stretch occupies residues 36–64; it reads SNKPEIPPHRDNNAQWDDDDDWPDKDKKK.

This sequence belongs to the UPF0370 family.

The protein resides in the cell membrane. This chain is UPF0370 protein YE1145, found in Yersinia enterocolitica serotype O:8 / biotype 1B (strain NCTC 13174 / 8081).